The sequence spans 696 residues: Elongation factor G (696 aa).

The region spanning E8 to I288 is the tr-type G domain. Residues A17–T24, D86–H90, and N140–D143 each bind GTP.

The protein belongs to the TRAFAC class translation factor GTPase superfamily. Classic translation factor GTPase family. EF-G/EF-2 subfamily.

The protein localises to the cytoplasm. In terms of biological role, catalyzes the GTP-dependent ribosomal translocation step during translation elongation. During this step, the ribosome changes from the pre-translocational (PRE) to the post-translocational (POST) state as the newly formed A-site-bound peptidyl-tRNA and P-site-bound deacylated tRNA move to the P and E sites, respectively. Catalyzes the coordinated movement of the two tRNA molecules, the mRNA and conformational changes in the ribosome. The protein is Elongation factor G of Chelativorans sp. (strain BNC1).